A 252-amino-acid chain; its full sequence is uncharacterized protein (252 aa).

This sequence belongs to the LarE family.

This is an uncharacterized protein from Methanocaldococcus jannaschii (strain ATCC 43067 / DSM 2661 / JAL-1 / JCM 10045 / NBRC 100440) (Methanococcus jannaschii).